Consider the following 408-residue polypeptide: Elongation factor Tu (408 aa).

Positions 10 to 219 (KTHVNVGTIG…ALDTYIPDPV (210 aa)) constitute a tr-type G domain. GTP-binding positions include 19–26 (GHVDHGKT), 88–92 (DCPGH), and 143–146 (NKCD). Residue Thr-26 participates in Mg(2+) binding.

It belongs to the TRAFAC class translation factor GTPase superfamily. Classic translation factor GTPase family. EF-Tu/EF-1A subfamily. As to quaternary structure, monomer.

Its subcellular location is the cytoplasm. The enzyme catalyses GTP + H2O = GDP + phosphate + H(+). In terms of biological role, GTP hydrolase that promotes the GTP-dependent binding of aminoacyl-tRNA to the A-site of ribosomes during protein biosynthesis. This chain is Elongation factor Tu, found in Brachyspira hyodysenteriae (strain ATCC 49526 / WA1).